A 190-amino-acid chain; its full sequence is Large ribosomal subunit protein bL9 (190 aa).

The protein belongs to the bacterial ribosomal protein bL9 family.

In terms of biological role, binds to the 23S rRNA. This chain is Large ribosomal subunit protein bL9, found in Methylorubrum extorquens (strain CM4 / NCIMB 13688) (Methylobacterium extorquens).